We begin with the raw amino-acid sequence, 156 residues long: 6,7-dimethyl-8-ribityllumazine synthase (156 aa).

Residues Phe23, 57–59, and 81–83 each bind 5-amino-6-(D-ribitylamino)uracil; these read AYE and AII. 86-87 contacts (2S)-2-hydroxy-3-oxobutyl phosphate; it reads GT. The active-site Proton donor is His89. Phe114 contributes to the 5-amino-6-(D-ribitylamino)uracil binding site. Arg128 serves as a coordination point for (2S)-2-hydroxy-3-oxobutyl phosphate.

The protein belongs to the DMRL synthase family.

It catalyses the reaction (2S)-2-hydroxy-3-oxobutyl phosphate + 5-amino-6-(D-ribitylamino)uracil = 6,7-dimethyl-8-(1-D-ribityl)lumazine + phosphate + 2 H2O + H(+). It functions in the pathway cofactor biosynthesis; riboflavin biosynthesis; riboflavin from 2-hydroxy-3-oxobutyl phosphate and 5-amino-6-(D-ribitylamino)uracil: step 1/2. Catalyzes the formation of 6,7-dimethyl-8-ribityllumazine by condensation of 5-amino-6-(D-ribitylamino)uracil with 3,4-dihydroxy-2-butanone 4-phosphate. This is the penultimate step in the biosynthesis of riboflavin. The protein is 6,7-dimethyl-8-ribityllumazine synthase of Helicobacter acinonychis (strain Sheeba).